Here is a 124-residue protein sequence, read N- to C-terminus: Large ribosomal subunit protein bL12 (124 aa).

The protein belongs to the bacterial ribosomal protein bL12 family. Homodimer. Part of the ribosomal stalk of the 50S ribosomal subunit. Forms a multimeric L10(L12)X complex, where L10 forms an elongated spine to which 2 to 4 L12 dimers bind in a sequential fashion. Binds GTP-bound translation factors.

Forms part of the ribosomal stalk which helps the ribosome interact with GTP-bound translation factors. Is thus essential for accurate translation. The sequence is that of Large ribosomal subunit protein bL12 from Pelodictyon phaeoclathratiforme (strain DSM 5477 / BU-1).